A 271-amino-acid chain; its full sequence is Fatty acid elongase 2 (271 aa).

The chain crosses the membrane as a helical span at residues 16 to 36 (WMIDNVDVAGFLCLLYLGLVW). N-linked (GlcNAc...) asparagine glycosylation is present at Asn-52. 2 consecutive transmembrane segments (helical) span residues 59-79 (VFIM…IVVV) and 110-130 (FWVG…VLLV). The HxxHH motif motif lies at 140 to 144 (HWYHH). His-143 acts as the Nucleophile in catalysis. The next 3 helical transmembrane spans lie at 162-182 (IFVF…YFAM), 194-214 (IAPV…AVTM), and 241-261 (GVVM…ESYL).

This sequence belongs to the ELO family.

The protein localises to the endoplasmic reticulum membrane. It carries out the reaction an acyl-CoA + malonyl-CoA + H(+) = a 3-oxoacyl-CoA + CO2 + CoA. The protein operates within lipid metabolism; fatty acid biosynthesis. Involved in the synthesis of fatty acids. Elongates C10 fatty acids to C14. The chain is Fatty acid elongase 2 from Trypanosoma brucei brucei (strain 927/4 GUTat10.1).